Reading from the N-terminus, the 305-residue chain is DNA-directed RNA polymerase 35 kDa subunit (305 aa).

Belongs to the poxviridae DNA-directed RNA polymerase 35 kDa subunit family. In terms of assembly, the DNA-dependent RNA polymerase used for intermediate and late genes expression consists of eight subunits 147 kDa, 133 kDa, 35 kDa, 30 kDa, 22 kDa, 19 kDa, 18 kDa and 7 kDa totalling more than 500 kDa in mass. The same holoenzyme, with the addition of the transcription-specificity factor RAP94, is used for early gene expression.

Its subcellular location is the virion. The catalysed reaction is RNA(n) + a ribonucleoside 5'-triphosphate = RNA(n+1) + diphosphate. Functionally, part of the DNA-dependent RNA polymerase which catalyzes the transcription of viral DNA into RNA using the four ribonucleoside triphosphates as substrates. Responsible for the transcription of early, intermediate and late genes. DNA-dependent RNA polymerase associates with the early transcription factor (ETF), itself composed of D6 and A7, thereby allowing the early genes transcription. Late transcription, and probably also intermediate transcription, require newly synthesized RNA polymerase. In Cynomys gunnisoni (Gunnison's prairie dog), this protein is DNA-directed RNA polymerase 35 kDa subunit (OPG156).